Here is a 284-residue protein sequence, read N- to C-terminus: 2-dehydro-3-deoxyphosphooctonate aldolase (284 aa).

The protein belongs to the KdsA family.

Its subcellular location is the cytoplasm. It carries out the reaction D-arabinose 5-phosphate + phosphoenolpyruvate + H2O = 3-deoxy-alpha-D-manno-2-octulosonate-8-phosphate + phosphate. Its pathway is carbohydrate biosynthesis; 3-deoxy-D-manno-octulosonate biosynthesis; 3-deoxy-D-manno-octulosonate from D-ribulose 5-phosphate: step 2/3. It participates in bacterial outer membrane biogenesis; lipopolysaccharide biosynthesis. This chain is 2-dehydro-3-deoxyphosphooctonate aldolase, found in Vibrio atlanticus (strain LGP32) (Vibrio splendidus (strain Mel32)).